Here is a 388-residue protein sequence, read N- to C-terminus: Dual-specificity RNA methyltransferase RlmN (388 aa).

The active-site Proton acceptor is Glu-109. Residues 115–354 enclose the Radical SAM core domain; the sequence is EEDRATLCVS…TIVRKTRGDD (240 aa). Cys-122 and Cys-359 are disulfide-bonded. [4Fe-4S] cluster is bound by residues Cys-129, Cys-133, and Cys-136. Residues 183-184, Ser-215, 237-239, and Asn-316 contribute to the S-adenosyl-L-methionine site; these read GE and SLH. The active-site S-methylcysteine intermediate is the Cys-359.

It belongs to the radical SAM superfamily. RlmN family. The cofactor is [4Fe-4S] cluster.

It localises to the cytoplasm. It catalyses the reaction adenosine(2503) in 23S rRNA + 2 reduced [2Fe-2S]-[ferredoxin] + 2 S-adenosyl-L-methionine = 2-methyladenosine(2503) in 23S rRNA + 5'-deoxyadenosine + L-methionine + 2 oxidized [2Fe-2S]-[ferredoxin] + S-adenosyl-L-homocysteine. It carries out the reaction adenosine(37) in tRNA + 2 reduced [2Fe-2S]-[ferredoxin] + 2 S-adenosyl-L-methionine = 2-methyladenosine(37) in tRNA + 5'-deoxyadenosine + L-methionine + 2 oxidized [2Fe-2S]-[ferredoxin] + S-adenosyl-L-homocysteine. Specifically methylates position 2 of adenine 2503 in 23S rRNA and position 2 of adenine 37 in tRNAs. m2A2503 modification seems to play a crucial role in the proofreading step occurring at the peptidyl transferase center and thus would serve to optimize ribosomal fidelity. This is Dual-specificity RNA methyltransferase RlmN from Enterobacter sp. (strain 638).